The sequence spans 345 residues: NADPH dehydrogenase (345 aa).

23 to 26 is a binding site for FMN; it reads SPMC. Tyr-28 is a binding site for substrate. Ala-60 and Gln-102 together coordinate FMN. 164-167 lines the substrate pocket; that stretch reads HGAH. FMN is bound by residues Arg-215 and 307–308; that span reads GR.

Belongs to the NADH:flavin oxidoreductase/NADH oxidase family. NamA subfamily. As to quaternary structure, homotetramer. FMN serves as cofactor.

The catalysed reaction is A + NADPH + H(+) = AH2 + NADP(+). Functionally, catalyzes the reduction of the double bond of an array of alpha,beta-unsaturated aldehydes and ketones. It also reduces the nitro group of nitroester and nitroaromatic compounds. It could have a role in detoxification processes. This is NADPH dehydrogenase from Bacillus cereus (strain Q1).